The following is a 185-amino-acid chain: Thiol:disulfide interchange protein DsbE (185 aa).

Over 1–4 the chain is Cytoplasmic; sequence MKRN. A helical transmembrane segment spans residues 5 to 25; that stretch reads VLLLPLLIFLLIAAALLWQLA. The Periplasmic segment spans residues 26–185; that stretch reads RNAQGDDPTN…WDRYSREAAQ (160 aa). The region spanning 39–177 is the Thioredoxin domain; the sequence is ALTGKPVPAF…WESELKPLWD (139 aa). A disulfide bond links cysteine 80 and cysteine 83.

This sequence belongs to the thioredoxin family. DsbE subfamily.

Its subcellular location is the cell inner membrane. Involved in disulfide bond formation. Catalyzes a late, reductive step in the assembly of periplasmic c-type cytochromes, probably the reduction of disulfide bonds of the apocytochrome c to allow covalent linkage with the heme. Possible subunit of a heme lyase. The sequence is that of Thiol:disulfide interchange protein DsbE (dsbE1) from Salmonella typhi.